A 473-amino-acid polypeptide reads, in one-letter code: Glutamate--tRNA ligase (473 aa).

The 'HIGH' region motif lies at 11 to 21 (PSPTGFLHIGG). Positions 240–244 (KLSKR) match the 'KMSKS' region motif. ATP is bound at residue Lys-243.

It belongs to the class-I aminoacyl-tRNA synthetase family. Glutamate--tRNA ligase type 1 subfamily. Monomer.

The protein localises to the cytoplasm. It carries out the reaction tRNA(Glu) + L-glutamate + ATP = L-glutamyl-tRNA(Glu) + AMP + diphosphate. In terms of biological role, catalyzes the attachment of glutamate to tRNA(Glu) in a two-step reaction: glutamate is first activated by ATP to form Glu-AMP and then transferred to the acceptor end of tRNA(Glu). The polypeptide is Glutamate--tRNA ligase (Rhodopseudomonas palustris (strain ATCC BAA-98 / CGA009)).